Consider the following 121-residue polypeptide: Putative SNURF-like protein (121 aa).

It belongs to the SNURF family.

In Homo sapiens (Human), this protein is Putative SNURF-like protein (SNURFL).